Consider the following 132-residue polypeptide: Small ribosomal subunit protein uS8 (132 aa).

It belongs to the universal ribosomal protein uS8 family. As to quaternary structure, part of the 30S ribosomal subunit. Contacts proteins S5 and S12.

Its function is as follows. One of the primary rRNA binding proteins, it binds directly to 16S rRNA central domain where it helps coordinate assembly of the platform of the 30S subunit. This Corynebacterium kroppenstedtii (strain DSM 44385 / JCM 11950 / CIP 105744 / CCUG 35717) protein is Small ribosomal subunit protein uS8.